Here is an 85-residue protein sequence, read N- to C-terminus: U4-theraphotoxin-Hhn1a (85 aa).

The signal sequence occupies residues 1–22; it reads MKMTLIAILTCAAVLVLHITAA. The propeptide occupies 23-48; the sequence is EELEAESQLMEVGMPDTELEAVDEER. 3 disulfide bridges follow: C52-C66, C56-C77, and C71-C82.

Belongs to the neurotoxin 12 (Hwtx-2) family. 02 (Hwtx-2) subfamily. In terms of assembly, monomer. Expressed by the venom gland.

It localises to the secreted. Its function is as follows. Neurotoxin active on both insects and mammals. The chain is U4-theraphotoxin-Hhn1a from Cyriopagopus hainanus (Chinese bird spider).